The following is a 554-amino-acid chain: Hydroxylamine reductase (554 aa).

Residues C3, C6, C18, and C25 each coordinate [2Fe-2S] cluster. H252, E276, C320, C408, C436, C461, E495, and K497 together coordinate hybrid [4Fe-2O-2S] cluster. C408 bears the Cysteine persulfide mark.

Belongs to the HCP family. It depends on [2Fe-2S] cluster as a cofactor. The cofactor is hybrid [4Fe-2O-2S] cluster.

Its subcellular location is the cytoplasm. The catalysed reaction is A + NH4(+) + H2O = hydroxylamine + AH2 + H(+). Catalyzes the reduction of hydroxylamine to form NH(3) and H(2)O. This is Hydroxylamine reductase from Shewanella pealeana (strain ATCC 700345 / ANG-SQ1).